Here is a 397-residue protein sequence, read N- to C-terminus: Dimethyladenosine transferase 2, mitochondrial (397 aa).

The N-terminal 44 residues, 1-44, are a transit peptide targeting the mitochondrion; the sequence is MRGLAMRLPPRLALSVLAGRGPSCILGSGAATRKDWQERNRRSF. S-adenosyl-L-methionine contacts are provided by isoleucine 75, glutamate 124, and aspartate 150. The segment at 329-330 is DNA-binding; sequence KR.

The protein belongs to the class I-like SAM-binding methyltransferase superfamily. rRNA adenine N(6)-methyltransferase family. KsgA subfamily. In terms of assembly, homodimer. Component of the mitochondrial transcription initiation complex, composed at least of TFB2M, TFAM and POLRMT. In this complex TFAM recruits POLRMT to the promoter whereas TFB2M induces structural changes in POLRMT to enable promoter opening and trapping of the DNA non-template strand. Interacts with mitochondrial RNA polymerase POLRMT. Interacts with TFAM.

The protein resides in the mitochondrion. It catalyses the reaction adenosine in rRNA + S-adenosyl-L-methionine = N(6)-methyladenosine in rRNA + S-adenosyl-L-homocysteine + H(+). Its function is as follows. S-adenosyl-L-methionine-dependent rRNA methyltransferase which may methylate two specific adjacent adenosines in the loop of a conserved hairpin near the 3'-end of 12S mitochondrial rRNA. Component of the mitochondrial transcription initiation complex, composed at least of TFB2M, TFAM and POLRMT that is required for basal transcription of mitochondrial DNA. In this complex TFAM recruits POLRMT to a specific promoter whereas TFB2M induces structural changes in POLRMT to enable promoter opening and trapping of the DNA non-template strand. Stimulates transcription independently of the methyltransferase activity. This is Dimethyladenosine transferase 2, mitochondrial from Rattus norvegicus (Rat).